A 75-amino-acid polypeptide reads, in one-letter code: CDC42 small effector protein 1 (75 aa).

2 S-palmitoyl cysteine lipidation sites follow: cysteine 10 and cysteine 11. The region spanning 30 to 43 (IGEPTNFVHLTHIG) is the CRIB domain. Residues 45-75 (GEMADGMQPSGPIKEQMRSKVPHANGRNSLL) form a disordered region.

This sequence belongs to the CDC42SE/SPEC family.

The protein resides in the cytoplasm. Its subcellular location is the cytoskeleton. The protein localises to the cell membrane. Functionally, probably involved in the organization of the actin cytoskeleton by acting downstream of CDC42, inducing actin filament assembly. This is CDC42 small effector protein 1 (cdc42se1) from Danio rerio (Zebrafish).